The primary structure comprises 601 residues: Uptake hydrogenase large subunit (601 aa).

Residues Cys74, Cys77, Cys580, and Cys583 each contribute to the Ni(2+) site.

This sequence belongs to the [NiFe]/[NiFeSe] hydrogenase large subunit family. In terms of assembly, heterodimer of a large and a small subunit. The cofactor is Ni(2+).

It localises to the cell membrane. It catalyses the reaction H2 + A = AH2. Its function is as follows. This enzyme recycles the H(2) produced by nitrogenase to increase the production of ATP and to protect nitrogenase against inhibition or damage by O(2) under carbon- or phosphate-limited conditions. This chain is Uptake hydrogenase large subunit (hupL), found in Azotobacter chroococcum mcd 1.